Reading from the N-terminus, the 242-residue chain is MTFRFSARCRLIKRFLLRLLLACAVLWGGGVALFSIVPVPFSAVMLERQLGAWLSGNFHYIAHSDWVGMDEISPWMGLAVIAAEDQKFPEHWGFDVPAIEKALAHNERNENRIRGASTLSQQTAKNLFLWDGRSWLRKGLEAGLTVGIETVWSKKRILTVYLNIAEFGEGTFGVEAASQRYFHKPASRLTAAEAALLAAVLPNPIRFRADAPSGYIRSRQAWILRQMRQLGGEGFMRANQLH.

The helical transmembrane segment at 19 to 39 threads the bilayer; sequence LLLACAVLWGGGVALFSIVPV.

Belongs to the glycosyltransferase 51 family.

Its subcellular location is the cell inner membrane. It carries out the reaction [GlcNAc-(1-&gt;4)-Mur2Ac(oyl-L-Ala-gamma-D-Glu-L-Lys-D-Ala-D-Ala)](n)-di-trans,octa-cis-undecaprenyl diphosphate + beta-D-GlcNAc-(1-&gt;4)-Mur2Ac(oyl-L-Ala-gamma-D-Glu-L-Lys-D-Ala-D-Ala)-di-trans,octa-cis-undecaprenyl diphosphate = [GlcNAc-(1-&gt;4)-Mur2Ac(oyl-L-Ala-gamma-D-Glu-L-Lys-D-Ala-D-Ala)](n+1)-di-trans,octa-cis-undecaprenyl diphosphate + di-trans,octa-cis-undecaprenyl diphosphate + H(+). It functions in the pathway cell wall biogenesis; peptidoglycan biosynthesis. Its function is as follows. Peptidoglycan polymerase that catalyzes glycan chain elongation from lipid-linked precursors. The chain is Biosynthetic peptidoglycan transglycosylase from Klebsiella oxytoca.